The sequence spans 264 residues: Small ribosomal subunit protein eS1 (264 aa).

N6-acetyllysine; alternate is present on lysine 34. A Glycyl lysine isopeptide (Lys-Gly) (interchain with G-Cter in SUMO2); alternate cross-link involves residue lysine 34. Residue lysine 56 is modified to N6-acetyllysine. At tyrosine 155 the chain carries ADP-ribosyltyrosine. Residues 232–264 are disordered; sequence HGEGSSSGKATGDETGAKVERADGYEPPVQESV. A phosphoserine mark is found at serine 236 and serine 237. Residues 242–255 show a composition bias toward basic and acidic residues; the sequence is TGDETGAKVERADG. Position 249 is an N6-acetyllysine; alternate (lysine 249). Lysine 249 is covalently cross-linked (Glycyl lysine isopeptide (Lys-Gly) (interchain with G-Cter in SUMO2); alternate). Residue tyrosine 256 is modified to Phosphotyrosine. Serine 263 carries the post-translational modification Phosphoserine.

The protein belongs to the eukaryotic ribosomal protein eS1 family. Component of the small ribosomal subunit. Mature ribosomes consist of a small (40S) and a large (60S) subunit. The 40S subunit contains about 33 different proteins and 1 molecule of RNA (18S). The 60S subunit contains about 49 different proteins and 3 molecules of RNA (28S, 5.8S and 5S). Identified in a IGF2BP1-dependent mRNP granule complex containing untranslated mRNAs. Binds with high affinity to IPO4. Interacts with DDIT3. Part of the small subunit (SSU) processome, composed of more than 70 proteins and the RNA chaperone small nucleolar RNA (snoRNA) U3. Post-translationally, ADP-ribosylated at Tyr-155 by PARP1 in presence of HPF1.

It is found in the cytoplasm. Its subcellular location is the nucleus. It localises to the nucleolus. Functionally, component of the small ribosomal subunit. The ribosome is a large ribonucleoprotein complex responsible for the synthesis of proteins in the cell. Part of the small subunit (SSU) processome, first precursor of the small eukaryotic ribosomal subunit. During the assembly of the SSU processome in the nucleolus, many ribosome biogenesis factors, an RNA chaperone and ribosomal proteins associate with the nascent pre-rRNA and work in concert to generate RNA folding, modifications, rearrangements and cleavage as well as targeted degradation of pre-ribosomal RNA by the RNA exosome. May play a role during erythropoiesis through regulation of transcription factor DDIT3. This Bos taurus (Bovine) protein is Small ribosomal subunit protein eS1.